A 156-amino-acid polypeptide reads, in one-letter code: Endoribonuclease YbeY (156 aa).

Zn(2+)-binding residues include His-117, His-121, and His-127.

This sequence belongs to the endoribonuclease YbeY family. Zn(2+) serves as cofactor.

The protein localises to the cytoplasm. In terms of biological role, single strand-specific metallo-endoribonuclease involved in late-stage 70S ribosome quality control and in maturation of the 3' terminus of the 16S rRNA. The sequence is that of Endoribonuclease YbeY from Shewanella halifaxensis (strain HAW-EB4).